The chain runs to 227 residues: Cleavage and polyadenylation specificity factor subunit 5 (227 aa).

The residue at position 2 (S2) is an N-acetylserine. Residues 2-147 (SVVPPNRSQT…DWVIDDCIGN (146 aa)) are necessary for RNA-binding. R15 is subject to Omega-N-methylarginine. An N6-acetyllysine mark is found at K23 and K29. Phosphotyrosine is present on Y40. K56 carries the N6-acetyllysine modification. In terms of domain architecture, Nudix hydrolase spans 76–201 (MRRTVEGVLI…KLVAAPLFEL (126 aa)). The necessary for interactions with PAPOLA and PABPN1 stretch occupies residues 81–160 (EGVLIVHEHR…PNFEPPQYPY (80 aa)). Residues 102 to 104 (TFF) are interaction with RNA. The Nudix box signature appears at 109–130 (GELNPGEDEVEGLKRLMTEILG).

Belongs to the Nudix hydrolase family. CPSF5 subfamily. Homodimer (via N- and C-terminus); binds RNA as homodimer. Component of the cleavage factor Im (CFIm) complex which is a heterotetramer composed of two subunits of NUDT21/CPSF5 and two subunits of CPSF6 or CPSF7 or a heterodimer of CPSF6 and CPSF7. The cleavage factor Im (CFIm) complex associates with the CPSF and CSTF complexes to promote the assembly of the core mRNA 3'-processing machinery. Interacts with CPSF6 (via the RRM domain); this interaction is direct and enhances binding to RNA. Interacts with CPSF7. Interacts with FIP1L1; this interaction occurs in a RNA sequence-specific manner. Interacts with PABPN1. Interacts (via N-terminus) with PAPOLA (via C-terminus); this interaction is direct and diminished by acetylation. Interacts with SNRNP70. Interacts with VIRMA. In terms of processing, acetylated mainly by p300/CBP, recruited to the complex by CPSF6. Acetylation decreases interaction with PAPAO. Deacetylated by the class I/II HDACs, HDAC1, HDAC3 and HDAC10, and by the class III HDACs, SIRT1 and SIRT2. In terms of tissue distribution, expressed in testis. Expressed in male germ cells (at protein level).

Its subcellular location is the nucleus. The protein resides in the cytoplasm. Component of the cleavage factor Im (CFIm) complex that functions as an activator of the pre-mRNA 3'-end cleavage and polyadenylation processing required for the maturation of pre-mRNA into functional mRNAs. CFIm contributes to the recruitment of multiprotein complexes on specific sequences on the pre-mRNA 3'-end, so called cleavage and polyadenylation signals (pA signals). Most pre-mRNAs contain multiple pA signals, resulting in alternative cleavage and polyadenylation (APA) producing mRNAs with variable 3'-end formation. The CFIm complex acts as a key regulator of cleavage and polyadenylation site choice during APA through its binding to 5'-UGUA-3' elements localized in the 3'-untranslated region (UTR) for a huge number of pre-mRNAs. NUDT21/CPSF5 activates indirectly the mRNA 3'-processing machinery by recruiting CPSF6 and/or CPSF7. Binds to 5'-UGUA-3' elements localized upstream of pA signals that act as enhancers of pre-mRNA 3'-end processing. The homodimer mediates simultaneous sequence-specific recognition of two 5'-UGUA-3' elements within the pre-mRNA. Plays a role in somatic cell fate transitions and pluripotency by regulating widespread changes in gene expression through an APA-dependent function. Binds to chromatin. Binds to, but does not hydrolyze mono- and di-adenosine nucleotides. The protein is Cleavage and polyadenylation specificity factor subunit 5 of Mus musculus (Mouse).